The following is a 453-amino-acid chain: Growth/differentiation factor 9 (453 aa).

The N-terminal stretch at 1–27 (MALPNKFFLWFCCFAWLCFPISLDSLP) is a signal peptide. A propeptide spanning residues 28–318 (SRGEAQIVAR…EGVRSSRHRR (291 aa)) is cleaved from the precursor. N-linked (GlcNAc...) asparagine glycans are attached at residues asparagine 163, asparagine 236, asparagine 255, and asparagine 269. The segment at 304–328 (GEEAAEGVRSSRHRRDQESASSELK) is disordered. A compositionally biased stretch (basic and acidic residues) spans 318–328 (RDQESASSELK). N-linked (GlcNAc...) asparagine glycosylation is present at asparagine 337. 3 cysteine pairs are disulfide-bonded: cysteine 352/cysteine 418, cysteine 381/cysteine 450, and cysteine 385/cysteine 452.

The protein belongs to the TGF-beta family. Homodimer or heterodimer (Potential). But, in contrast to other members of this family, cannot be disulfide-linked. Post-translationally, phosphorylated; phosphorylation is critical for GDF9 function.

It localises to the secreted. Functionally, required for ovarian folliculogenesis. The polypeptide is Growth/differentiation factor 9 (GDF9) (Ovis aries (Sheep)).